A 97-amino-acid polypeptide reads, in one-letter code: Aspartyl/glutamyl-tRNA(Asn/Gln) amidotransferase subunit C (97 aa).

The protein belongs to the GatC family. Heterotrimer of A, B and C subunits.

It carries out the reaction L-glutamyl-tRNA(Gln) + L-glutamine + ATP + H2O = L-glutaminyl-tRNA(Gln) + L-glutamate + ADP + phosphate + H(+). The enzyme catalyses L-aspartyl-tRNA(Asn) + L-glutamine + ATP + H2O = L-asparaginyl-tRNA(Asn) + L-glutamate + ADP + phosphate + 2 H(+). Functionally, allows the formation of correctly charged Asn-tRNA(Asn) or Gln-tRNA(Gln) through the transamidation of misacylated Asp-tRNA(Asn) or Glu-tRNA(Gln) in organisms which lack either or both of asparaginyl-tRNA or glutaminyl-tRNA synthetases. The reaction takes place in the presence of glutamine and ATP through an activated phospho-Asp-tRNA(Asn) or phospho-Glu-tRNA(Gln). The polypeptide is Aspartyl/glutamyl-tRNA(Asn/Gln) amidotransferase subunit C (Listeria monocytogenes serotype 4b (strain CLIP80459)).